A 351-amino-acid polypeptide reads, in one-letter code: Phosphoribosylformylglycinamidine cyclo-ligase (351 aa).

Belongs to the AIR synthase family.

It is found in the cytoplasm. The enzyme catalyses 2-formamido-N(1)-(5-O-phospho-beta-D-ribosyl)acetamidine + ATP = 5-amino-1-(5-phospho-beta-D-ribosyl)imidazole + ADP + phosphate + H(+). The protein operates within purine metabolism; IMP biosynthesis via de novo pathway; 5-amino-1-(5-phospho-D-ribosyl)imidazole from N(2)-formyl-N(1)-(5-phospho-D-ribosyl)glycinamide: step 2/2. The sequence is that of Phosphoribosylformylglycinamidine cyclo-ligase from Azotobacter vinelandii (strain DJ / ATCC BAA-1303).